The sequence spans 192 residues: Probable cobalt-precorrin-6B C(15)-methyltransferase (decarboxylating) (192 aa).

S-adenosyl-L-methionine is bound by residues T20, 44–48 (GSGTG), E68, and A96.

It belongs to the methyltransferase superfamily. Archaeal-type CbiT family.

It catalyses the reaction Co-precorrin-6B + S-adenosyl-L-methionine = Co-precorrin-7 + S-adenosyl-L-homocysteine + CO2. Its pathway is cofactor biosynthesis; adenosylcobalamin biosynthesis; cob(II)yrinate a,c-diamide from sirohydrochlorin (anaerobic route): step 8/10. Catalyzes the methylation of C-15 in cobalt-precorrin-6B followed by the decarboxylation of C-12 to form cobalt-precorrin-7. The polypeptide is Probable cobalt-precorrin-6B C(15)-methyltransferase (decarboxylating) (Sulfolobus acidocaldarius (strain ATCC 33909 / DSM 639 / JCM 8929 / NBRC 15157 / NCIMB 11770)).